Consider the following 283-residue polypeptide: Probable endonuclease 4 (283 aa).

Residues His67, His107, Glu144, Asp178, His181, His215, Asp228, His230, and Glu260 each contribute to the Zn(2+) site.

This sequence belongs to the AP endonuclease 2 family. It depends on Zn(2+) as a cofactor.

It carries out the reaction Endonucleolytic cleavage to 5'-phosphooligonucleotide end-products.. Functionally, endonuclease IV plays a role in DNA repair. It cleaves phosphodiester bonds at apurinic or apyrimidinic (AP) sites, generating a 3'-hydroxyl group and a 5'-terminal sugar phosphate. In Citrifermentans bemidjiense (strain ATCC BAA-1014 / DSM 16622 / JCM 12645 / Bem) (Geobacter bemidjiensis), this protein is Probable endonuclease 4.